The sequence spans 415 residues: L-cysteine:1D-myo-inositol 2-amino-2-deoxy-alpha-D-glucopyranoside ligase (415 aa).

Cys-43 serves as a coordination point for Zn(2+). Residues 43-46 (CGIT), Thr-58, and 81-83 (NIT) each bind L-cysteinyl-5'-AMP. The 'HIGH' region signature appears at 45 to 55 (ITPYDATHLGH). The short motif at 187-192 (ERGGDP) is the 'ERGGDP' region element. An L-cysteinyl-5'-AMP-binding site is contributed by Trp-227. Residue Cys-231 participates in Zn(2+) binding. 249–251 (GSD) contacts L-cysteinyl-5'-AMP. His-256 lines the Zn(2+) pocket. L-cysteinyl-5'-AMP is bound at residue Ile-283. The short motif at 289-293 (KMSKS) is the 'KMSKS' region element.

This sequence belongs to the class-I aminoacyl-tRNA synthetase family. MshC subfamily. In terms of assembly, monomer. Zn(2+) serves as cofactor.

It catalyses the reaction 1D-myo-inositol 2-amino-2-deoxy-alpha-D-glucopyranoside + L-cysteine + ATP = 1D-myo-inositol 2-(L-cysteinylamino)-2-deoxy-alpha-D-glucopyranoside + AMP + diphosphate + H(+). Its function is as follows. Catalyzes the ATP-dependent condensation of GlcN-Ins and L-cysteine to form L-Cys-GlcN-Ins. The sequence is that of L-cysteine:1D-myo-inositol 2-amino-2-deoxy-alpha-D-glucopyranoside ligase from Mycobacterium sp. (strain JLS).